The primary structure comprises 116 residues: Ribosome-binding factor A (116 aa).

This sequence belongs to the RbfA family. In terms of assembly, monomer. Binds 30S ribosomal subunits, but not 50S ribosomal subunits or 70S ribosomes.

It localises to the cytoplasm. Functionally, one of several proteins that assist in the late maturation steps of the functional core of the 30S ribosomal subunit. Associates with free 30S ribosomal subunits (but not with 30S subunits that are part of 70S ribosomes or polysomes). Required for efficient processing of 16S rRNA. May interact with the 5'-terminal helix region of 16S rRNA. The chain is Ribosome-binding factor A from Streptococcus uberis (strain ATCC BAA-854 / 0140J).